The primary structure comprises 122 residues: Small ribosomal subunit protein uS13 (122 aa).

The tract at residues 97-122 is disordered; that stretch reads PVRGQRTHTNARTRKGPAKAIAGKKK.

The protein belongs to the universal ribosomal protein uS13 family. In terms of assembly, part of the 30S ribosomal subunit. Forms a loose heterodimer with protein S19. Forms two bridges to the 50S subunit in the 70S ribosome.

Its function is as follows. Located at the top of the head of the 30S subunit, it contacts several helices of the 16S rRNA. In the 70S ribosome it contacts the 23S rRNA (bridge B1a) and protein L5 of the 50S subunit (bridge B1b), connecting the 2 subunits; these bridges are implicated in subunit movement. Contacts the tRNAs in the A and P-sites. The sequence is that of Small ribosomal subunit protein uS13 from Bartonella henselae (strain ATCC 49882 / DSM 28221 / CCUG 30454 / Houston 1) (Rochalimaea henselae).